The chain runs to 514 residues: Glutathione-binding protein GsiB (514 aa).

Positions 1–26 (MARAVHRSGLVALGIATALMASCAFA) are cleaved as a signal peptide.

It belongs to the bacterial solute-binding protein 5 family. The complex is composed of two ATP-binding proteins (GsiA), two transmembrane proteins (GsiC and GsiD) and a solute-binding protein (GsiB).

It is found in the periplasm. Part of the ABC transporter complex GsiABCD involved in glutathione import. Binds glutathione. This Shigella flexneri serotype 5b (strain 8401) protein is Glutathione-binding protein GsiB.